A 70-amino-acid chain; its full sequence is DNA-directed RNA polymerases I, II, and III subunit rpabc5 (70 aa).

Positions 7, 10, 44, and 45 each coordinate Zn(2+).

The protein belongs to the archaeal Rpo10/eukaryotic RPB10 RNA polymerase subunit family. As to quaternary structure, component of the RNA polymerase I (Pol I), RNA polymerase II (Pol II) and RNA polymerase III (Pol III) complexes.

The protein resides in the nucleus. Functionally, DNA-dependent RNA polymerase catalyzes the transcription of DNA into RNA using the four ribonucleoside triphosphates as substrates. Common component of RNA polymerases I, II and III which synthesize ribosomal RNA precursors, mRNA precursors and many functional non-coding RNAs, and a small RNAs, such as 5S rRNA and tRNAs, respectively. Pol II is the central component of the basal RNA polymerase II transcription machinery. Pols are composed of mobile elements that move relative to each other. In Pol II, RBP10 is part of the core element with the central large cleft. In Dictyostelium discoideum (Social amoeba), this protein is DNA-directed RNA polymerases I, II, and III subunit rpabc5 (polr2l).